The following is a 148-amino-acid chain: Large ribosomal subunit protein bL9 (148 aa).

Belongs to the bacterial ribosomal protein bL9 family.

Binds to the 23S rRNA. This is Large ribosomal subunit protein bL9 from Staphylococcus saprophyticus subsp. saprophyticus (strain ATCC 15305 / DSM 20229 / NCIMB 8711 / NCTC 7292 / S-41).